A 235-amino-acid chain; its full sequence is (5-formylfuran-3-yl)methyl phosphate synthase (235 aa).

Residue Lys27 is the Schiff-base intermediate with substrate of the active site. Lys85 functions as the Proton acceptor in the catalytic mechanism.

The protein belongs to the MfnB family.

It catalyses the reaction 2 D-glyceraldehyde 3-phosphate = 4-(hydroxymethyl)-2-furancarboxaldehyde phosphate + phosphate + 2 H2O. The protein operates within cofactor biosynthesis; methanofuran biosynthesis. Functionally, catalyzes the formation of 4-(hydroxymethyl)-2-furancarboxaldehyde phosphate (4-HFC-P) from two molecules of glyceraldehyde-3-P (GA-3-P). This chain is (5-formylfuran-3-yl)methyl phosphate synthase, found in Methanococcus aeolicus (strain ATCC BAA-1280 / DSM 17508 / OCM 812 / Nankai-3).